We begin with the raw amino-acid sequence, 252 residues long: MLKLASLNRIVLTGTLLAAAGLASGCSSIDRLSQIGESPKLTAIDNPTTQPGYKPVQMPMPKPETVSYNANSLWRNGSRAFFRDQRAARVGDLLTVTVNFTDRANIANQTQRSRVSKDDSGIADFAGSKLLGGTAQKVLPGRLLTTDSESLSDGKGLVQRQENLQTSVATVVTQVLPNGNLVVEGKQEIRVNFEIRELIVAGIVRPEDIQSDNTIDSSKIAQARIAYGGRGQITDVQQPRYGQQVMDVLLPF.

The N-terminal stretch at 1–25 (MLKLASLNRIVLTGTLLAAAGLASG) is a signal peptide. Cys-26 is lipidated: N-palmitoyl cysteine. The S-diacylglycerol cysteine moiety is linked to residue Cys-26.

The protein belongs to the FlgH family. The basal body constitutes a major portion of the flagellar organelle and consists of four rings (L,P,S, and M) mounted on a central rod.

The protein localises to the cell outer membrane. The protein resides in the bacterial flagellum basal body. In terms of biological role, assembles around the rod to form the L-ring and probably protects the motor/basal body from shearing forces during rotation. This Nitrobacter winogradskyi (strain ATCC 25391 / DSM 10237 / CIP 104748 / NCIMB 11846 / Nb-255) protein is Flagellar L-ring protein.